We begin with the raw amino-acid sequence, 664 residues long: Methionine--tRNA ligase (664 aa).

Residues 15–25 (YYPSGKAHIGH) carry the 'HIGH' region motif. The 'KMSKS' region signature appears at 310 to 314 (KMSKS). Position 313 (Lys313) interacts with ATP. The 102-residue stretch at 563-664 (DFDKIDLRVA…SALPNGAKVK (102 aa)) folds into the tRNA-binding domain.

This sequence belongs to the class-I aminoacyl-tRNA synthetase family. MetG type 2B subfamily. In terms of assembly, homodimer.

The protein resides in the cytoplasm. The enzyme catalyses tRNA(Met) + L-methionine + ATP = L-methionyl-tRNA(Met) + AMP + diphosphate. In terms of biological role, is required not only for elongation of protein synthesis but also for the initiation of all mRNA translation through initiator tRNA(fMet) aminoacylation. The protein is Methionine--tRNA ligase (metG) of Listeria innocua serovar 6a (strain ATCC BAA-680 / CLIP 11262).